The sequence spans 194 residues: Putative manganese efflux pump MntP (194 aa).

The next 6 membrane-spanning stretches (helical) occupy residues 3 to 23, 40 to 60, 65 to 85, 109 to 129, 134 to 154, and 169 to 189; these read FYAT…VAVC, GFIF…LGLY, IIQW…GRMI, LIAT…GLAF, IVHT…LGML, and IIGG…HLDL.

The protein belongs to the MntP (TC 9.B.29) family.

It localises to the cell inner membrane. Its function is as follows. Probably functions as a manganese efflux pump. The protein is Putative manganese efflux pump MntP of Proteus mirabilis (strain HI4320).